The chain runs to 321 residues: Olfactory receptor 5K3 (321 aa).

Residues 1–25 are Extracellular-facing; sequence MNKENHSLIAEFILTGFTYHPKLKT. N-linked (GlcNAc...) asparagine glycosylation is present at asparagine 5. Residues 26–46 traverse the membrane as a helical segment; that stretch reads VLFVVFFAIYLITMVGNIGLV. Residues 47–56 are Cytoplasmic-facing; it reads ALIYIEQRLH. Residues 57-77 form a helical membrane-spanning segment; the sequence is TPMYIFLGNLVLMDSCCSSAI. Topologically, residues 78 to 97 are extracellular; it reads TPKMLENFFSEDKRITLYEC. Cysteine 97 and cysteine 179 are oxidised to a cystine. The chain crosses the membrane as a helical span at residues 98 to 118; sequence MAQFYFLCLAETTDCFLLAAM. Over 119-143 the chain is Cytoplasmic; that stretch reads AYDCYVAICNPLQYHTMMSKTLCIQ. The chain crosses the membrane as a helical span at residues 144-164; it reads MTAGAYLAGNLHPMIEVEFLL. At 165 to 196 the chain is on the extracellular side; sequence RLTFCGSHQINHFFCDVLPLYRLSCINPYINE. The helical transmembrane segment at 197 to 217 threads the bilayer; the sequence is LVLFILAGSIQIFTIVLVSYF. At 218–235 the chain is on the cytoplasmic side; that stretch reads YILFTIFTMKSKEGRGKA. The helical transmembrane segment at 236 to 256 threads the bilayer; that stretch reads LSTCASHFLSVSIFCDSLLFM. The Extracellular portion of the chain corresponds to 257 to 269; that stretch reads YARPGAVNEGDKD. Residues 270–290 traverse the membrane as a helical segment; sequence IPVAIFYTLVIPLLNPFIYSL. The Cytoplasmic portion of the chain corresponds to 291–321; that stretch reads RNKEVINIMKKIMKKRKFCHILKQMSSPLAT.

The protein belongs to the G-protein coupled receptor 1 family.

Its subcellular location is the cell membrane. In terms of biological role, odorant receptor. The polypeptide is Olfactory receptor 5K3 (OR5K3) (Homo sapiens (Human)).